A 304-amino-acid chain; its full sequence is HPr kinase/phosphorylase (304 aa).

Active-site residues include His136 and Lys157. An ATP-binding site is contributed by 151–158; it reads GESGIGKS. Mg(2+) is bound at residue Ser158. Asp175 functions as the Proton acceptor; for phosphorylation activity. Proton donor; for dephosphorylation activity in the catalytic mechanism. The tract at residues 198–207 is important for the catalytic mechanism of both phosphorylation and dephosphorylation; that stretch reads LEVRGIGIID. Residue Glu199 coordinates Mg(2+). Arg240 is an active-site residue. An important for the catalytic mechanism of dephosphorylation region spans residues 261 to 266; that stretch reads PVRPGR.

This sequence belongs to the HPrK/P family. As to quaternary structure, homohexamer. Requires Mg(2+) as cofactor.

The enzyme catalyses [HPr protein]-L-serine + ATP = [HPr protein]-O-phospho-L-serine + ADP + H(+). It carries out the reaction [HPr protein]-O-phospho-L-serine + phosphate + H(+) = [HPr protein]-L-serine + diphosphate. In terms of biological role, catalyzes the ATP- as well as the pyrophosphate-dependent phosphorylation of a specific serine residue in HPr, a phosphocarrier protein of the phosphoenolpyruvate-dependent sugar phosphotransferase system (PTS). HprK/P also catalyzes the pyrophosphate-producing, inorganic phosphate-dependent dephosphorylation (phosphorolysis) of seryl-phosphorylated HPr (P-Ser-HPr). The two antagonistic activities of HprK/P are regulated by several intracellular metabolites, which change their concentration in response to the absence or presence of rapidly metabolisable carbon sources (glucose, fructose, etc.) in the growth medium. Therefore, by controlling the phosphorylation state of HPr, HPrK/P is a sensor enzyme that plays a major role in the regulation of carbon metabolism and sugar transport: it mediates carbon catabolite repression (CCR), and regulates PTS-catalyzed carbohydrate uptake and inducer exclusion. The polypeptide is HPr kinase/phosphorylase (Clostridium botulinum (strain Eklund 17B / Type B)).